We begin with the raw amino-acid sequence, 162 residues long: Nucleotide-binding protein SCO4614 (162 aa).

This sequence belongs to the YajQ family.

It is found in the cytoplasm. It localises to the nucleoid. Nucleotide-binding protein. The polypeptide is Nucleotide-binding protein SCO4614 (Streptomyces coelicolor (strain ATCC BAA-471 / A3(2) / M145)).